A 151-amino-acid polypeptide reads, in one-letter code: SsrA-binding protein (151 aa).

It belongs to the SmpB family.

The protein localises to the cytoplasm. In terms of biological role, required for rescue of stalled ribosomes mediated by trans-translation. Binds to transfer-messenger RNA (tmRNA), required for stable association of tmRNA with ribosomes. tmRNA and SmpB together mimic tRNA shape, replacing the anticodon stem-loop with SmpB. tmRNA is encoded by the ssrA gene; the 2 termini fold to resemble tRNA(Ala) and it encodes a 'tag peptide', a short internal open reading frame. During trans-translation Ala-aminoacylated tmRNA acts like a tRNA, entering the A-site of stalled ribosomes, displacing the stalled mRNA. The ribosome then switches to translate the ORF on the tmRNA; the nascent peptide is terminated with the 'tag peptide' encoded by the tmRNA and targeted for degradation. The ribosome is freed to recommence translation, which seems to be the essential function of trans-translation. In Chlamydia trachomatis serovar A (strain ATCC VR-571B / DSM 19440 / HAR-13), this protein is SsrA-binding protein.